Consider the following 124-residue polypeptide: Histone H2B (124 aa).

The interval 1–33 (MPEPAKSAPKKGSKKAVTKTAGKGGKKRKRSRK) is disordered. Lys6 and Lys11 each carry N6-acetyllysine. The segment covering 8-17 (APKKGSKKAV) has biased composition (basic residues). Ser13 bears the Phosphoserine mark. Residues Lys14 and Lys19 each carry the N6-acetyllysine modification. A glycan (O-linked (GlcNAc) serine) is linked at Ser111. Lys119 participates in a covalent cross-link: Glycyl lysine isopeptide (Lys-Gly) (interchain with G-Cter in ubiquitin).

This sequence belongs to the histone H2B family. In terms of assembly, the nucleosome is a histone octamer containing two molecules each of H2A, H2B, H3 and H4 assembled in one H3-H4 heterotetramer and two H2A-H2B heterodimers. The octamer wraps approximately 147 bp of DNA. In terms of processing, monoubiquitination of Lys-119 by BRE1 gives a specific tag for epigenetic transcriptional activation and is also prerequisite for histone H3 'Lys-4' and 'Lys-79' methylation. Phosphorylated during apoptosis; which facilitates apoptotic chromatin condensation. Post-translationally, glcNAcylation at Ser-111 promotes monoubiquitination of Lys-119. It fluctuates in response to extracellular glucose, and associates with transcribed genes.

Its subcellular location is the nucleus. The protein localises to the chromosome. Its function is as follows. Core component of nucleosome. Nucleosomes wrap and compact DNA into chromatin, limiting DNA accessibility to the cellular machineries which require DNA as a template. Histones thereby play a central role in transcription regulation, DNA repair, DNA replication and chromosomal stability. DNA accessibility is regulated via a complex set of post-translational modifications of histones, also called histone code, and nucleosome remodeling. In Oncorhynchus mykiss (Rainbow trout), this protein is Histone H2B.